Consider the following 367-residue polypeptide: Phosphoribosylaminoimidazole-succinocarboxamide synthase (367 aa).

It belongs to the SAICAR synthetase family.

It catalyses the reaction 5-amino-1-(5-phospho-D-ribosyl)imidazole-4-carboxylate + L-aspartate + ATP = (2S)-2-[5-amino-1-(5-phospho-beta-D-ribosyl)imidazole-4-carboxamido]succinate + ADP + phosphate + 2 H(+). It participates in purine metabolism; IMP biosynthesis via de novo pathway; 5-amino-1-(5-phospho-D-ribosyl)imidazole-4-carboxamide from 5-amino-1-(5-phospho-D-ribosyl)imidazole-4-carboxylate: step 1/2. This Aliivibrio fischeri (strain MJ11) (Vibrio fischeri) protein is Phosphoribosylaminoimidazole-succinocarboxamide synthase.